Consider the following 135-residue polypeptide: Nucleoside diphosphate kinase (135 aa).

Residues K11, F59, R87, T93, R104, and N114 each contribute to the ATP site. H117 acts as the Pros-phosphohistidine intermediate in catalysis.

It belongs to the NDK family. Homotetramer. Mg(2+) is required as a cofactor.

It is found in the cytoplasm. It carries out the reaction a 2'-deoxyribonucleoside 5'-diphosphate + ATP = a 2'-deoxyribonucleoside 5'-triphosphate + ADP. It catalyses the reaction a ribonucleoside 5'-diphosphate + ATP = a ribonucleoside 5'-triphosphate + ADP. Its function is as follows. Major role in the synthesis of nucleoside triphosphates other than ATP. The ATP gamma phosphate is transferred to the NDP beta phosphate via a ping-pong mechanism, using a phosphorylated active-site intermediate. In Marinomonas sp. (strain MWYL1), this protein is Nucleoside diphosphate kinase.